The sequence spans 243 residues: Zwei Ig domain protein zig-6 (243 aa).

The N-terminal stretch at 1 to 20 (MTKLCLLLLPLVFLVSYSFA) is a signal peptide. 2 consecutive Ig-like C2-type domains span residues 30 to 118 (PNAN…MDVI) and 133 to 212 (GQVL…KTVT). Cysteine 47 and cysteine 102 form a disulfide bridge. N-linked (GlcNAc...) asparagine glycosylation is found at asparagine 91 and asparagine 142. A disulfide bond links cysteine 145 and cysteine 196.

As to expression, expressed in head and tail body wall muscles.

The protein localises to the secreted. Probably not involved in maintaining the position of ASI and ASH head neuron cell bodies and ventral nerve cord axons of PVQ, PVP, RMEV, AVK and HSN neurons. This chain is Zwei Ig domain protein zig-6, found in Caenorhabditis elegans.